Here is a 109-residue protein sequence, read N- to C-terminus: Class I hydrophobin G (109 aa).

Positions Met1–Ala19 are cleaved as a signal peptide. Disulfide bonds link Cys36/Cys90, Cys42/Cys84, Cys43/Cys76, and Cys91/Cys105.

It belongs to the fungal hydrophobin family.

It is found in the secreted. Its subcellular location is the cell wall. Its function is as follows. Aerial growth, conidiation, and dispersal of filamentous fungi in the environment rely upon a capability of their secreting small amphipathic proteins called hydrophobins (HPBs) with low sequence identity. Class I can self-assemble into an outermost layer of rodlet bundles on aerial cell surfaces, conferring cellular hydrophobicity that supports fungal growth, development and dispersal; whereas Class II form highly ordered films at water-air interfaces through intermolecular interactions but contribute nothing to the rodlet structure. In P.expansum, hydrophobins contribute to germination, tolerance to cold stress and mycotoxins patulin and citrinin production. This is Class I hydrophobin G from Penicillium expansum (Blue mold rot fungus).